A 351-amino-acid polypeptide reads, in one-letter code: Tsukushi-A (351 aa).

A signal peptide spans 1 to 17; that stretch reads MALSSWIFFLLVHGIVG. 9 LRR repeats span residues 59 to 82, 85 to 108, 109 to 132, 134 to 155, 158 to 181, 182 to 203, 204 to 226, 252 to 276, and 277 to 300; these read PLDT…VLSG, YTTL…TFSK, LRYL…SFLY, RLTE…AFTL, QGRS…AERP, VPNI…DLHG, IPLR…SFLG, LTSL…MFFG, and LKAL…IMLH.

As to quaternary structure, interacts with bmp4. Interacts with dll1 (via extracellular region). Interacts with fgf8; inhibits fgf8 signaling. Interacts with nodal2/Xnr2; enhances nodal2 activity. In terms of tissue distribution, during embryogenesis, localized to the animal hemisphere during late blastula and gastrula stages. At stage 10, expression is also detected around the dorsal blastopore lip. Expressed in the mandibular crest segment, branchial crest segment and differentiating somites at stage 21/22. Expressed in the germ ring including the shield at shield stage and in the tailbud at the 10-somite stage. At the early neurula stage (stage 13), expression is hardly detectable in the presumptive neural plate region, and restricted to the non-neural ectoderm where its levels increase by stage 14, especially in the presumptive anterior neural fold. Also expressed in the prospective cranial neural crest. At the early tailbud stage (stage 23), expressed in cranial neural crest cells, the dorsal retina and the lens placode.

It is found in the secreted. Functionally, contributes to various developmental events through its interactions with multiple signaling pathways. Dorsalizing factor which functions as an inhibitor of bone morphogenetic proteins (BMP) during gastrulation. Promotes dll1-dependent activation of Notch signaling and is required for neural crest formation. Induces endoderm and dorsal mesoderm formation by enhancing nodal2/Xnr2 activity while inhibiting ventrolateral mesoderm formation through inhibition of fgf8. The polypeptide is Tsukushi-A (Xenopus laevis (African clawed frog)).